The chain runs to 201 residues: 3-isopropylmalate dehydratase small subunit (201 aa).

Belongs to the LeuD family. LeuD type 1 subfamily. In terms of assembly, heterodimer of LeuC and LeuD.

The enzyme catalyses (2R,3S)-3-isopropylmalate = (2S)-2-isopropylmalate. It participates in amino-acid biosynthesis; L-leucine biosynthesis; L-leucine from 3-methyl-2-oxobutanoate: step 2/4. Catalyzes the isomerization between 2-isopropylmalate and 3-isopropylmalate, via the formation of 2-isopropylmaleate. This is 3-isopropylmalate dehydratase small subunit from Shewanella oneidensis (strain ATCC 700550 / JCM 31522 / CIP 106686 / LMG 19005 / NCIMB 14063 / MR-1).